A 143-amino-acid polypeptide reads, in one-letter code: Deoxyuridine 5'-triphosphate nucleotidohydrolase (143 aa).

Substrate contacts are provided by residues 62-64, N75, and 79-81; these read RSG and TID.

Belongs to the dUTPase family. The cofactor is Mg(2+).

The enzyme catalyses dUTP + H2O = dUMP + diphosphate + H(+). It functions in the pathway pyrimidine metabolism; dUMP biosynthesis; dUMP from dCTP (dUTP route): step 2/2. Its function is as follows. This enzyme is involved in nucleotide metabolism: it produces dUMP, the immediate precursor of thymidine nucleotides and it decreases the intracellular concentration of dUTP so that uracil cannot be incorporated into DNA. This Acaryochloris marina (strain MBIC 11017) protein is Deoxyuridine 5'-triphosphate nucleotidohydrolase.